The primary structure comprises 239 residues: Phospholipase A2 (239 aa).

A signal peptide spans 1 to 19 (MSLIIVLVISVLSADAVLS). Positions 20 to 105 (MDNELYLNLE…GRCLSVGESE (86 aa)) are excised as a propeptide. Ca(2+)-binding residues include Trp-113, Gly-115, and Gly-117. Cystine bridges form between Cys-114-Cys-136, Cys-135-Cys-174, Cys-142-Cys-167, Cys-165-Cys-202, and Cys-207-Cys-217. His-139 is an active-site residue. Asp-140 is a Ca(2+) binding site. Positions 211–213 (RSP) are excised as a propeptide.

The protein belongs to the phospholipase A2 family. Group III subfamily. In terms of assembly, heterodimer composed of a small subunit and a large subunit; disulfid-linked. Requires Ca(2+) as cofactor. As to expression, expressed by the venom gland.

The protein localises to the secreted. The catalysed reaction is a 1,2-diacyl-sn-glycero-3-phosphocholine + H2O = a 1-acyl-sn-glycero-3-phosphocholine + a fatty acid + H(+). In terms of biological role, toxic phospholipase A2, which may catalyze the calcium-dependent hydrolysis of the 2-acyl groups in 3-sn-phosphoglycerides. Inhibits both skeletal (RYR1) and cardiac (RYR2) ryanodine receptors (calcium release channels). Probably blocks ryanodine receptors by generating a lipid product. The polypeptide is Phospholipase A2 (Hoffmannihadrurus gertschi (Scorpion)).